The following is a 126-amino-acid chain: Large ribosomal subunit protein bL20 (126 aa).

The protein belongs to the bacterial ribosomal protein bL20 family.

Functionally, binds directly to 23S ribosomal RNA and is necessary for the in vitro assembly process of the 50S ribosomal subunit. It is not involved in the protein synthesizing functions of that subunit. The polypeptide is Large ribosomal subunit protein bL20 (Parafrankia sp. (strain EAN1pec)).